The primary structure comprises 101 residues: Putative pterin-4-alpha-carbinolamine dehydratase (101 aa).

This sequence belongs to the pterin-4-alpha-carbinolamine dehydratase family.

It catalyses the reaction (4aS,6R)-4a-hydroxy-L-erythro-5,6,7,8-tetrahydrobiopterin = (6R)-L-erythro-6,7-dihydrobiopterin + H2O. In Rhizobium etli (strain ATCC 51251 / DSM 11541 / JCM 21823 / NBRC 15573 / CFN 42), this protein is Putative pterin-4-alpha-carbinolamine dehydratase.